The following is a 178-amino-acid chain: Arginine repressor (178 aa).

The disordered stretch occupies residues 1–21 (MSQAQENEHAGPAVPQTRTAR).

The protein belongs to the ArgR family.

It localises to the cytoplasm. Its pathway is amino-acid biosynthesis; L-arginine biosynthesis [regulation]. Functionally, regulates arginine biosynthesis genes. The chain is Arginine repressor from Streptomyces avermitilis (strain ATCC 31267 / DSM 46492 / JCM 5070 / NBRC 14893 / NCIMB 12804 / NRRL 8165 / MA-4680).